The chain runs to 352 residues: uncharacterized protein (352 aa).

To Synechocystis PCC 6803 slr0039.

This is an uncharacterized protein from Archaeoglobus fulgidus (strain ATCC 49558 / DSM 4304 / JCM 9628 / NBRC 100126 / VC-16).